The following is a 236-amino-acid chain: tRNA1(Val) (adenine(37)-N6)-methyltransferase (236 aa).

The protein belongs to the methyltransferase superfamily. tRNA (adenine-N(6)-)-methyltransferase family.

It localises to the cytoplasm. It catalyses the reaction adenosine(37) in tRNA1(Val) + S-adenosyl-L-methionine = N(6)-methyladenosine(37) in tRNA1(Val) + S-adenosyl-L-homocysteine + H(+). Its function is as follows. Specifically methylates the adenine in position 37 of tRNA(1)(Val) (anticodon cmo5UAC). The sequence is that of tRNA1(Val) (adenine(37)-N6)-methyltransferase from Histophilus somni (strain 129Pt) (Haemophilus somnus).